The chain runs to 458 residues: KAT8 regulatory NSL complex subunit 2 (458 aa).

Lysine 78 participates in a covalent cross-link: Glycyl lysine isopeptide (Lys-Gly) (interchain with G-Cter in SUMO2). A disordered region spans residues 126-182 (ELGSQTPESSRSEASRILDEDSWSDGDQEPITVDQTWRGDPDSEADSIDSDQEDPLK). The residue at position 131 (threonine 131) is a Phosphothreonine. Residues 135–144 (SRSEASRILD) are compositionally biased toward basic and acidic residues. Serine 147, serine 149, serine 168, serine 172, and serine 175 each carry phosphoserine. Acidic residues predominate over residues 167–178 (DSEADSIDSDQE). The interval 308–364 (DVRCSNQSLPMTRHCLTHICQDTNQVLFKCCQGSEEVPCNKPVPVSLSEDPCCPLHF) is required for interaction with other NSL complex members. A disordered region spans residues 419–458 (QMAGDGCRSQGPRNSEKAPAPLPQSGIATANGKPEPTSVS).

In terms of assembly, component of the NSL complex at least composed of KAT8/MOF, KANSL1, KANSL2, KANSL3, MCRS1, PHF20, OGT1/OGT, WDR5 and HCFC1.

It localises to the nucleus. The protein localises to the mitochondrion. Non-catalytic component of the NSL histone acetyltransferase complex, a multiprotein complex that mediates histone H4 acetylation at 'Lys-5'- and 'Lys-8' (H4K5ac and H4K8ac) at transcription start sites and promotes transcription initiation. Required for NSL complex stability and for transcription of intraciliary transport genes in both ciliated and non-ciliated cells by regulating histone H4 acetylation at 'Lys-5'- and 'Lys-12' (H4K5ac and H4K12ac). This is necessary for cilium assembly in ciliated cells and for organization of the microtubule cytoskeleton in non-ciliated cells. Required within the NSL complex to maintain nuclear architecture stability by promoting KAT8-mediated acetylation of lamin LMNA. This is KAT8 regulatory NSL complex subunit 2 (KANSL2) from Bos taurus (Bovine).